Reading from the N-terminus, the 597-residue chain is Arginine--tRNA ligase (597 aa).

The 'HIGH' region motif lies at 138 to 148 (ANPTGPMHVGH).

Belongs to the class-I aminoacyl-tRNA synthetase family. Monomer.

It localises to the cytoplasm. It carries out the reaction tRNA(Arg) + L-arginine + ATP = L-arginyl-tRNA(Arg) + AMP + diphosphate. This chain is Arginine--tRNA ligase, found in Rhodopseudomonas palustris (strain ATCC BAA-98 / CGA009).